Reading from the N-terminus, the 312-residue chain is Pyridoxal kinase (312 aa).

Position 1 is an N-acetylmethionine (methionine 1). Residues serine 12 and threonine 47 each contribute to the pyridoxal site. Pyridoxal 5'-phosphate is bound at residue threonine 47. Serine 59 bears the Phosphoserine mark. Residue aspartate 113 coordinates ATP. Residue aspartate 113 coordinates Na(+). Aspartate 118 serves as a coordination point for Mg(2+). A Na(+)-binding site is contributed by threonine 148. Residues 150–153 (NQFE) and 186–187 (TS) contribute to the ATP site. Residue threonine 186 coordinates Na(+). Position 213 is a phosphoserine (serine 213). Residues 226–228 (VDA) and threonine 233 contribute to the ATP site. 234–235 (GD) contacts pyridoxal 5'-phosphate. Aspartate 235 acts as the Proton acceptor in catalysis. Serine 285 bears the Phosphoserine mark.

This sequence belongs to the pyridoxine kinase family. In terms of assembly, homodimer. The cofactor is Zn(2+). Mg(2+) serves as cofactor.

It localises to the cytoplasm. The protein localises to the cytosol. It catalyses the reaction pyridoxal + ATP = pyridoxal 5'-phosphate + ADP + H(+). It carries out the reaction pyridoxamine + ATP = pyridoxamine 5'-phosphate + ADP + H(+). The enzyme catalyses pyridoxine + ATP = pyridoxine 5'-phosphate + ADP + H(+). Its pathway is cofactor metabolism; pyridoxal 5'-phosphate salvage; pyridoxal 5'-phosphate from pyridoxal: step 1/1. It functions in the pathway cofactor metabolism; pyridoxal 5'-phosphate salvage; pyridoxine 5'-phosphate from pyridoxine: step 1/1. It participates in cofactor metabolism; pyridoxal 5'-phosphate salvage; pyridoxamine 5'-phosphate from pyridoxamine: step 1/1. Activity is increased in the presence of K(+)or Na(+). In terms of biological role, catalyzes the phosphorylation of the dietary vitamin B6 vitamers pyridoxal (PL), pyridoxine (PN) and pyridoxamine (PM) to form pyridoxal 5'-phosphate (PLP), pyridoxine 5'-phosphate (PNP) and pyridoxamine 5'-phosphate (PMP), respectively. PLP is the active form of vitamin B6, and acts as a cofactor for over 140 different enzymatic reactions. The polypeptide is Pyridoxal kinase (PDXK) (Bos taurus (Bovine)).